Reading from the N-terminus, the 145-residue chain is Transmembrane protein CCDC163 (145 aa).

The helical transmembrane segment at 38–54 threads the bilayer; the sequence is LIGLCICFFCSSGCIFL.

Its subcellular location is the membrane. In Homo sapiens (Human), this protein is Transmembrane protein CCDC163.